We begin with the raw amino-acid sequence, 661 residues long: UvrABC system protein B (661 aa).

The region spanning 25–182 (AGLNSKKRSQ…SDLVNLQYER (158 aa)) is the Helicase ATP-binding domain. 38 to 45 (GITGSGKT) provides a ligand contact to ATP. The short motif at 91–114 (YYDYYQPEAYIARTDTFIEKDSSI) is the Beta-hairpin element. Positions 430 to 592 (QVEDLISEIQ…IIPQTINRTI (163 aa)) constitute a Helicase C-terminal domain. The region spanning 621 to 656 (KAHIYKLKKAMLKAASNLEFEQATKLRDQLKNLEEA) is the UVR domain.

Belongs to the UvrB family. Forms a heterotetramer with UvrA during the search for lesions. Interacts with UvrC in an incision complex.

Its subcellular location is the cytoplasm. In terms of biological role, the UvrABC repair system catalyzes the recognition and processing of DNA lesions. A damage recognition complex composed of 2 UvrA and 2 UvrB subunits scans DNA for abnormalities. Upon binding of the UvrA(2)B(2) complex to a putative damaged site, the DNA wraps around one UvrB monomer. DNA wrap is dependent on ATP binding by UvrB and probably causes local melting of the DNA helix, facilitating insertion of UvrB beta-hairpin between the DNA strands. Then UvrB probes one DNA strand for the presence of a lesion. If a lesion is found the UvrA subunits dissociate and the UvrB-DNA preincision complex is formed. This complex is subsequently bound by UvrC and the second UvrB is released. If no lesion is found, the DNA wraps around the other UvrB subunit that will check the other stand for damage. This Rickettsia canadensis (strain McKiel) protein is UvrABC system protein B.